Here is a 129-residue protein sequence, read N- to C-terminus: MRHRKSGRHLSRTSAHRKAMFQNMAVSLFEHELIKTTLPKAKELRRVAEPLITLAKEDSVANRRLAFDRTRSKAAVGKLFNDLGKRYATRQGGYLRILKCGFRAGDNAPMAYVELVDRPVAGEVEAAAE.

It belongs to the bacterial ribosomal protein bL17 family. In terms of assembly, part of the 50S ribosomal subunit. Contacts protein L32.

The protein is Large ribosomal subunit protein bL17 of Stutzerimonas stutzeri (strain A1501) (Pseudomonas stutzeri).